The sequence spans 450 residues: 23S rRNA (uracil(1939)-C(5))-methyltransferase RlmD (450 aa).

The TRAM domain maps to 12–70; it reads SKQLSAKLSLSVNQLDHLGAGIAQHQGKVVFIPGALPDETVTVQFTEQKKNYARAKLIK. Cys83, Cys89, Cys92, and Cys171 together coordinate [4Fe-4S] cluster. 6 residues coordinate S-adenosyl-L-methionine: Gln283, Phe312, Asn317, Glu333, Asp360, and Asp380. The active-site Nucleophile is Cys406.

Belongs to the class I-like SAM-binding methyltransferase superfamily. RNA M5U methyltransferase family. RlmD subfamily.

The enzyme catalyses uridine(1939) in 23S rRNA + S-adenosyl-L-methionine = 5-methyluridine(1939) in 23S rRNA + S-adenosyl-L-homocysteine + H(+). Catalyzes the formation of 5-methyl-uridine at position 1939 (m5U1939) in 23S rRNA. This chain is 23S rRNA (uracil(1939)-C(5))-methyltransferase RlmD, found in Shewanella baltica (strain OS155 / ATCC BAA-1091).